We begin with the raw amino-acid sequence, 58 residues long: MSEIKVGENESLENALRRFKKKCARAGVLSEVRKREHYEKPSVKKKKKSEAARKRKFK.

A compositionally biased stretch (basic and acidic residues) spans 32–42; the sequence is VRKREHYEKPS. The tract at residues 32–58 is disordered; that stretch reads VRKREHYEKPSVKKKKKSEAARKRKFK. Residues 43-58 are compositionally biased toward basic residues; the sequence is VKKKKKSEAARKRKFK.

This sequence belongs to the bacterial ribosomal protein bS21 family.

The chain is Small ribosomal subunit protein bS21 from Clostridium botulinum (strain Okra / Type B1).